Consider the following 330-residue polypeptide: DNA-directed RNA polymerase subunit alpha (330 aa).

The tract at residues 1-235 is alpha N-terminal domain (alpha-NTD); sequence MVREKVKVST…DLFIHFLHAK (235 aa). The alpha C-terminal domain (alpha-CTD) stretch occupies residues 270–330; sequence IALKYIFIDQ…KQILGILEKK (61 aa).

It belongs to the RNA polymerase alpha chain family. In terms of assembly, in plastids the minimal PEP RNA polymerase catalytic core is composed of four subunits: alpha, beta, beta', and beta''. When a (nuclear-encoded) sigma factor is associated with the core the holoenzyme is formed, which can initiate transcription.

The protein resides in the plastid. It localises to the chloroplast. It carries out the reaction RNA(n) + a ribonucleoside 5'-triphosphate = RNA(n+1) + diphosphate. In terms of biological role, DNA-dependent RNA polymerase catalyzes the transcription of DNA into RNA using the four ribonucleoside triphosphates as substrates. The chain is DNA-directed RNA polymerase subunit alpha (rpoA) from Gossypium barbadense (Sea Island cotton).